A 365-amino-acid chain; its full sequence is Sulfate/thiosulfate import ATP-binding protein CysA (365 aa).

The ABC transporter domain occupies 3 to 237 (IEIANIKKSF…PATRFVLEFM (235 aa)). ATP is bound at residue 35–42 (GPSGSGKT).

The protein belongs to the ABC transporter superfamily. Sulfate/tungstate importer (TC 3.A.1.6) family. As to quaternary structure, the complex is composed of two ATP-binding proteins (CysA), two transmembrane proteins (CysT and CysW) and a solute-binding protein (CysP).

The protein resides in the cell inner membrane. It catalyses the reaction sulfate(out) + ATP + H2O = sulfate(in) + ADP + phosphate + H(+). The catalysed reaction is thiosulfate(out) + ATP + H2O = thiosulfate(in) + ADP + phosphate + H(+). Its function is as follows. Part of the ABC transporter complex CysAWTP involved in sulfate/thiosulfate import. Responsible for energy coupling to the transport system. In Escherichia coli O157:H7, this protein is Sulfate/thiosulfate import ATP-binding protein CysA.